A 122-amino-acid chain; its full sequence is Large ribosomal subunit protein uL14 (122 aa).

The protein belongs to the universal ribosomal protein uL14 family. In terms of assembly, part of the 50S ribosomal subunit. Forms a cluster with proteins L3 and L19. In the 70S ribosome, L14 and L19 interact and together make contacts with the 16S rRNA in bridges B5 and B8.

Binds to 23S rRNA. Forms part of two intersubunit bridges in the 70S ribosome. The polypeptide is Large ribosomal subunit protein uL14 (Nitrosococcus oceani (strain ATCC 19707 / BCRC 17464 / JCM 30415 / NCIMB 11848 / C-107)).